The primary structure comprises 254 residues: NH(3)-dependent NAD(+) synthetase (254 aa).

Position 29–36 (29–36 (GLSGGIDS)) interacts with ATP. Asp35 contributes to the Mg(2+) binding site. Arg115 contributes to the deamido-NAD(+) binding site. Thr135 contacts ATP. Glu140 provides a ligand contact to Mg(2+). Residues Lys148 and Asp155 each coordinate deamido-NAD(+). Residues Lys164 and Ser186 each contribute to the ATP site. 245-246 (HK) lines the deamido-NAD(+) pocket.

Belongs to the NAD synthetase family. Homodimer.

It catalyses the reaction deamido-NAD(+) + NH4(+) + ATP = AMP + diphosphate + NAD(+) + H(+). Its pathway is cofactor biosynthesis; NAD(+) biosynthesis; NAD(+) from deamido-NAD(+) (ammonia route): step 1/1. Its function is as follows. Catalyzes the ATP-dependent amidation of deamido-NAD to form NAD. Uses ammonia as a nitrogen source. The polypeptide is NH(3)-dependent NAD(+) synthetase (Methanococcus aeolicus (strain ATCC BAA-1280 / DSM 17508 / OCM 812 / Nankai-3)).